Reading from the N-terminus, the 811-residue chain is tRNA(Met) cytidine acetyltransferase TmcA (811 aa).

Residues glutamine 267 and arginine 439 each contribute to the ATP site. The N-acetyltransferase domain maps to lysine 473–proline 662. Acetyl-CoA contacts are provided by residues isoleucine 589 to threonine 591, glutamate 629, and arginine 636.

It belongs to the TmcA family.

It localises to the cytoplasm. The catalysed reaction is cytidine(34) in elongator tRNA(Met) + acetyl-CoA + ATP + H2O = N(4)-acetylcytidine(34) in elongator tRNA(Met) + ADP + phosphate + CoA + H(+). The enzyme catalyses a cytidine in RNA + acetyl-CoA + ATP + H2O = an N(4)-acetylcytidine in RNA + ADP + phosphate + CoA + H(+). It catalyses the reaction a cytidine in tRNA + acetyl-CoA + ATP + H2O = an N(4)-acetylcytidine in tRNA + ADP + phosphate + CoA + H(+). It carries out the reaction a cytidine in mRNA + acetyl-CoA + ATP + H2O = an N(4)-acetylcytidine in mRNA + ADP + phosphate + CoA + H(+). In terms of biological role, catalyzes the formation of N(4)-acetylcytidine (ac(4)C) at the wobble position of tRNA(Met), by using acetyl-CoA as an acetyl donor and ATP (or GTP). Its function is as follows. Catalyzes the formation of 267 N(4)-acetylcytidine (ac(4)C) sites in RNA, almost always on the middle C of a CCG motif. Modifications are found in rRNA, ncRNA, mRNA and tRNA. More acetylation is observed at 95 than at 75 or 85 degrees Celsius. The chain is tRNA(Met) cytidine acetyltransferase TmcA from Thermococcus sp. (strain AM4).